The following is a 184-amino-acid chain: UPF0397 protein SA2477 (184 aa).

Transmembrane regions (helical) follow at residues 11–31 (VVAIGIGAAVFVILGRFVVIP), 44–64 (AFLALISAIFGPFAGLMTGLV), 77–97 (AWWSWVICSGIIGCLYGWIGL), 111–131 (MIYFNIGQIIANIICWALIAP), and 148–168 (QGVISAVLNIISVGIIGTILL).

It belongs to the UPF0397 family.

It localises to the cell membrane. This Staphylococcus aureus (strain N315) protein is UPF0397 protein SA2477.